We begin with the raw amino-acid sequence, 1232 residues long: Dynactin subunit 1 (1232 aa).

Residues 31-73 (GATLFATGKWVGVILDDSKGKNDGTVQGRRYFTCEENHGIFVR) enclose the CAP-Gly domain. Disordered regions lie at residues 82-183 (DGAD…AQVK) and 339-358 (SASEKQEHIKVQKQMEKKNT). Over residues 86 to 95 (TTSPETPEPT) the composition is skewed to low complexity. Positions 108–117 (PKSSKLPTRP) are enriched in polar residues. Residues 118-130 (SSSAASSGTASAS) show a composition bias toward low complexity. Residues 133–144 (EISSSEPSTPAQ) are compositionally biased toward polar residues. A compositionally biased stretch (low complexity) spans 146-163 (PLAAPIIPSPSSAITSPV). Coiled coils occupy residues 170–505 (GPSK…KEQQ), 908–1005 (ETVI…RTIE), 1046–1071 (LLLQQIDALRLSMKHLKHENNKLKAH), and 1136–1166 (AAQLLEQTARLKSLSDTIDKLKNEVMKETVS). Basic and acidic residues predominate over residues 172–183 (SKEEENLRAQVK).

This sequence belongs to the dynactin 150 kDa subunit family. Monomer and homodimer. Subunit of dynactin, a multiprotein complex part of a tripartite complex with dynein and a adapter, such as BICDL1, BICD2 or HOOK3. The dynactin complex is built around ACTR1A/ACTB filament and consists of an actin-related filament composed of a shoulder domain, a pointed end and a barbed end. Its length is defined by its flexible shoulder domain. The soulder is composed of 2 DCTN1 subunits, 4 DCTN2 and 2 DCTN3. DCTN1/p150(glued) binds directly to microtubules and to cytoplasmic dynein.

The protein localises to the cytoplasm. It localises to the cytoskeleton. The protein resides in the microtubule organizing center. Its subcellular location is the centrosome. It is found in the centriole. The protein localises to the spindle. It localises to the cell cortex. Functionally, part of the dynactin complex that activates the molecular motor dynein for ultra-processive transport along microtubules. Plays a key role in dynein-mediated retrograde transport of vesicles and organelles along microtubules by recruiting and tethering dynein to microtubules. Binds to both dynein and microtubules providing a link between specific cargos, microtubules and dynein. Essential for targeting dynein to microtubule plus ends, recruiting dynein to membranous cargos and enhancing dynein processivity (the ability to move along a microtubule for a long distance without falling off the track). Can also act as a brake to slow the dynein motor during motility along the microtubule. Can regulate microtubule stability by promoting microtubule formation, nucleation and polymerization and by inhibiting microtubule catastrophe in neurons. Inhibits microtubule catastrophe by binding both to microtubules and to tubulin, leading to enhanced microtubule stability along the axon. Plays a role in metaphase spindle orientation. Plays a role in centriole cohesion and subdistal appendage organization and function. Its recruitment to the centriole in a KIF3A-dependent manner is essential for the maintenance of centriole cohesion and the formation of subdistal appendage. Also required for microtubule anchoring at the mother centriole. Plays a role in primary cilia formation. This Xenopus laevis (African clawed frog) protein is Dynactin subunit 1 (dctn1).